The sequence spans 255 residues: Large ribosomal subunit protein uL4 (255 aa).

It belongs to the universal ribosomal protein uL4 family. As to quaternary structure, part of the 50S ribosomal subunit.

Its function is as follows. One of the primary rRNA binding proteins, this protein initially binds near the 5'-end of the 23S rRNA. It is important during the early stages of 50S assembly. It makes multiple contacts with different domains of the 23S rRNA in the assembled 50S subunit and ribosome. Forms part of the polypeptide exit tunnel. The protein is Large ribosomal subunit protein uL4 of Pyrococcus horikoshii (strain ATCC 700860 / DSM 12428 / JCM 9974 / NBRC 100139 / OT-3).